The following is a 540-amino-acid chain: Growth factor receptor-bound protein 14 (540 aa).

At Thr-2 the chain carries N-acetylthreonine. Residue Gln-9 is modified to Phosphothreonine. Residues 106 to 192 (KKQVIKVYSE…NKLYFRKNYA (87 aa)) form the Ras-associating domain. A PH domain is found at 234–342 (YPEIHGFLHA…WVTAIRLLKY (109 aa)). Ser-372 and Ser-375 each carry phosphoserine. Residues 439-535 (WFHHKISRDE…VLPCKLKHYC (97 aa)) enclose the SH2 domain.

This sequence belongs to the GRB7/10/14 family. Interacts with the cytoplasmic domain of the autophosphorylated insulin receptor (INSR), through the SH2 domain. Interacts with GRB14 (via BPS domain); this interaction protects the tyrosines in the activation loop on INSR from dephosphorylation. Binds to the ankyrin repeat region of TNKS2 via its N-terminus. Interacts with activated NRAS. Interacts (via SH2 domain) with TEK/TIE2 (tyrosine phosphorylated). Phosphorylated on serine residues. Phosphorylated on tyrosine residues by TEK/TIE2. Expressed at high levels in the liver, kidney, pancreas, testis, ovary, heart and skeletal muscle.

It is found in the cytoplasm. The protein resides in the endosome membrane. Functionally, adapter protein which modulates coupling of cell surface receptor kinases with specific signaling pathways. Binds to, and suppresses signals from, the activated insulin receptor (INSR). Potent inhibitor of insulin-stimulated MAPK3 phosphorylation. Plays a critical role regulating PDPK1 membrane translocation in response to insulin stimulation and serves as an adapter protein to recruit PDPK1 to activated insulin receptor, thus promoting PKB/AKT1 phosphorylation and transduction of the insulin signal. The chain is Growth factor receptor-bound protein 14 (GRB14) from Homo sapiens (Human).